A 290-amino-acid polypeptide reads, in one-letter code: Bifunctional protein FolD (290 aa).

Residues 169 to 171 (GAS), isoleucine 194, and isoleucine 235 contribute to the NADP(+) site.

It belongs to the tetrahydrofolate dehydrogenase/cyclohydrolase family. Homodimer.

The catalysed reaction is (6R)-5,10-methylene-5,6,7,8-tetrahydrofolate + NADP(+) = (6R)-5,10-methenyltetrahydrofolate + NADPH. It carries out the reaction (6R)-5,10-methenyltetrahydrofolate + H2O = (6R)-10-formyltetrahydrofolate + H(+). Its pathway is one-carbon metabolism; tetrahydrofolate interconversion. Its function is as follows. Catalyzes the oxidation of 5,10-methylenetetrahydrofolate to 5,10-methenyltetrahydrofolate and then the hydrolysis of 5,10-methenyltetrahydrofolate to 10-formyltetrahydrofolate. In Helicobacter pylori (strain HPAG1), this protein is Bifunctional protein FolD.